The sequence spans 755 residues: LIM domain and actin-binding protein 1 (755 aa).

N-acetylmethionine is present on Met1. The residue at position 15 (Ser15) is a Phosphoserine. Positions 43-56 are enriched in basic and acidic residues; the sequence is KAAEEANMERKKNN. Residues 43–151 are disordered; it reads KAAEEANMER…YPRSEDSHDF (109 aa). Residues 88-97 show a composition bias toward polar residues; sequence DSLPNSSSDG. The residue at position 132 (Ser132) is a Phosphoserine. Positions 164–166 match the Required for interaction with NPC1L1 motif; that stretch reads CLG. 2 stretches are compositionally biased toward basic and acidic residues: residues 168 to 177 and 199 to 208; these read SRHEAEKPEM and MMFEKGEHSQ. The disordered stretch occupies residues 168–226; the sequence is SRHEAEKPEMSENTETSGKIEKYNVPLNRLKMMFEKGEHSQNKSPWTQGRNAGGRRLSE. Phosphoserine occurs at positions 225, 230, and 242. Residues 241–379 are disordered; sequence LSSSAFNSEK…ESSPSKTAKK (139 aa). Positions 249–258 are enriched in basic and acidic residues; it reads EKNESKRNLE. Ser263 carries the post-translational modification Phosphoserine. Residues 292–305 are compositionally biased toward basic and acidic residues; the sequence is KPSESKTHKWEQKE. Polar residues predominate over residues 342 to 354; sequence CNSQGRSEAQQPI. Phosphoserine occurs at positions 348, 360, 367, and 372. Over residues 363–375 the composition is skewed to polar residues; that stretch reads ARTSSLPESSPSK. Residues 386–446 form the LIM zinc-binding domain; it reads ESCVECQKTV…KPHFNQLFKS (61 aa). At Lys437 the chain carries N6-succinyllysine. Disordered stretches follow at residues 468-493 and 505-714; these read ENEE…GVED and SMEA…DTTT. Ser488 is modified (phosphoserine). A required for interaction with MYO5B region spans residues 491–511; sequence VEDAPIAKVGVLAASMEAKAS. 2 stretches are compositionally biased toward basic and acidic residues: residues 512–526 and 555–566; these read SQRE…ETKK and WPPEDEVCKTEA. The span at 599-611 shows a compositional bias: low complexity; sequence SSVKSPKPLSPSL. Phosphoserine is present on residues Ser600, Ser603, Ser608, and Ser616. Basic and acidic residues-rich tracts occupy residues 638–653 and 662–673; these read RPSR…RWQS and EAPRGRDGRSFE. Residues Ser697, Ser722, and Ser737 each carry the phosphoserine modification.

In terms of assembly, interacts with NPC1L1; bridges NPC1L1 with MYO5B. Interacts with MYO5B; bridges MYO5B with NPC1L1. Interacts with PXN; this complex stabilizes actin dynamics. Interacts with F-actin and G-actin. Interacts with LUZP1 (via C-terminus); both proteins restrict ciliation and may work together to regulate this process. Binds RAB40B (GTP-bound); interaction influences LIMA1 subcellular localization in lamellipodia during cell migration. Phosphorylation of the C-terminal region by MAPK1/MAPK3 reduces its association with F-actin and contributes to actin filament reorganization and enhanced cell motility. In terms of processing, ubiquitinated by the ECS(RAB40B) complex leading to its degradation. Expressed throughout the kidney, including renal cortex, medulla, and glomeruli. Expressed in glomeruli, tubular epithelial cells, and extraglomerular vascular endothelial cells (at protein level).

Its subcellular location is the cytoplasm. It is found in the cell junction. The protein localises to the focal adhesion. The protein resides in the cytoskeleton. It localises to the stress fiber. Its subcellular location is the cell membrane. It is found in the cell projection. The protein localises to the ruffle. The protein resides in the lamellipodium. Its function is as follows. Actin-binding protein involved in actin cytoskeleton regulation and dynamics. Increases the number and size of actin stress fibers and inhibits membrane ruffling. Inhibits actin filament depolymerization. Bundles actin filaments, delays filament nucleation and reduces formation of branched filaments. Acts as a negative regulator of primary cilium formation. Plays a role in cholesterol homeostasis. Influences plasma cholesterol levels through regulation of intestinal cholesterol absorption. May act as a scaffold protein by regulating NPC1L1 transportation, an essential protein for cholesterol absorption, to the plasma membrane by recruiting MYO5B to NPC1L1, and thus facilitates cholesterol uptake. This Rattus norvegicus (Rat) protein is LIM domain and actin-binding protein 1.